A 258-amino-acid polypeptide reads, in one-letter code: Global transcriptional regulator CodY (258 aa).

Positions Met1 to Leu156 are GAF domain. The segment at residues Ala204–Arg223 is a DNA-binding region (H-T-H motif).

This sequence belongs to the CodY family.

Its subcellular location is the cytoplasm. Its function is as follows. DNA-binding global transcriptional regulator which is involved in the adaptive response to starvation and acts by directly or indirectly controlling the expression of numerous genes in response to nutrient availability. During rapid exponential growth, CodY is highly active and represses genes whose products allow adaptation to nutrient depletion. This Clostridium acetobutylicum (strain ATCC 824 / DSM 792 / JCM 1419 / IAM 19013 / LMG 5710 / NBRC 13948 / NRRL B-527 / VKM B-1787 / 2291 / W) protein is Global transcriptional regulator CodY.